Reading from the N-terminus, the 54-residue chain is Large ribosomal subunit protein bL33 (54 aa).

Belongs to the bacterial ribosomal protein bL33 family.

The protein is Large ribosomal subunit protein bL33 of Thermobifida fusca (strain YX).